The chain runs to 259 residues: Type-2Aa cytolytic delta-endotoxin (259 aa).

This sequence belongs to the cyt1/cyt2 endotoxin family. In terms of assembly, homodimer (protoxin) and monomer (active toxin). Active after proteolytic processing.

Kills the larvae of dipteran insects by making pores in the epithelial cell membrane of the insect midgut. The polypeptide is Type-2Aa cytolytic delta-endotoxin (cyt2Aa1) (Bacillus thuringiensis subsp. kyushuensis).